A 430-amino-acid polypeptide reads, in one-letter code: Adenylosuccinate synthetase (430 aa).

GTP contacts are provided by residues 11 to 17 (GDEGKGK) and 39 to 41 (GHS). D12 (proton acceptor) is an active-site residue. Mg(2+)-binding residues include D12 and G39. IMP contacts are provided by residues 12 to 15 (DEGK), 37 to 40 (NAGH), T129, R143, N221, T236, and R300. H40 functions as the Proton donor in the catalytic mechanism. 296-302 (VSTGRKR) contributes to the substrate binding site. GTP contacts are provided by residues R302, 328-330 (KLD), and 412-414 (GTG).

This sequence belongs to the adenylosuccinate synthetase family. In terms of assembly, homodimer. Requires Mg(2+) as cofactor.

It localises to the cytoplasm. It carries out the reaction IMP + L-aspartate + GTP = N(6)-(1,2-dicarboxyethyl)-AMP + GDP + phosphate + 2 H(+). The protein operates within purine metabolism; AMP biosynthesis via de novo pathway; AMP from IMP: step 1/2. Plays an important role in the de novo pathway and in the salvage pathway of purine nucleotide biosynthesis. Catalyzes the first committed step in the biosynthesis of AMP from IMP. This is Adenylosuccinate synthetase from Neurospora crassa (strain ATCC 24698 / 74-OR23-1A / CBS 708.71 / DSM 1257 / FGSC 987).